The sequence spans 435 residues: Cell adhesion molecule 2 (435 aa).

The N-terminal stretch at 1-24 (MIWKRSAVLRFYSVCGLLLQGSQG) is a signal peptide. Over 25–367 (QFPLTQNVTV…ALAGQNGPDH (343 aa)) the chain is Extracellular. In terms of domain architecture, Ig-like V-type spans 27–119 (PLTQNVTVVE…PVKTSKAYLT (93 aa)). N-linked (GlcNAc...) asparagine glycans are attached at residues Asn31 and Asn51. Cystine bridges form between Cys44–Cys104, Cys146–Cys203, and Cys248–Cys296. 2 consecutive Ig-like C2-type domains span residues 127–219 (PQIS…VAMQ) and 227–312 (PSVK…YVLI). A glycan (N-linked (GlcNAc...) asparagine) is linked at Asn291. The helical transmembrane segment at 368–388 (ALIGGIVAVVVFVTLCSIFLL) threads the bilayer. The Cytoplasmic segment spans residues 389–435 (GRYLARHKGTYLTNEAKGAEDAPDADTAIINAEGSQVNAEEKKEYFI). Phosphoserine is present on Ser423.

Belongs to the nectin family.

It is found in the cell membrane. The protein localises to the synapse. The protein resides in the cell projection. Its subcellular location is the axon. Its function is as follows. Adhesion molecule that engages in homo- and heterophilic interactions with the other nectin-like family members, leading to cell aggregation. Important for synapse organization, providing regulated trans-synaptic adhesion. Preferentially binds to oligodendrocytes. (Microbial infection) Induces cell fusion in neuron infected by a neuropathogenic strain of measles. Interacts with measles hemagglutinin to trigger hyperfusogenic F-mediated membrane fusion and presumably transsynaptic cell-to-cell transmission of the virus. The protein is Cell adhesion molecule 2 (CADM2) of Homo sapiens (Human).